A 240-amino-acid polypeptide reads, in one-letter code: Protein unc-119 homolog A (240 aa).

Gly residues predominate over residues methionine 1–threonine 12. The interval methionine 1–glycine 61 is disordered. The segment covering glycine 13–proline 23 has biased composition (low complexity). 3 positions are modified to phosphoserine; by CK2: serine 37, serine 39, and serine 41. Tyrosine 131 lines the tetradecanoate pocket.

The protein belongs to the PDE6D/unc-119 family. As to quaternary structure, interacts with CABP4; in the absence of calcium. May interact with GTP-bound ARL1. Interacts with ARL2 and ARL3 (GTP-bound forms); this promotes the release of myristoylated cargo proteins. Found in a complex with ARL3, RP2 and UNC119; RP2 induces hydrolysis of GTP ARL3 in the complex, leading to the release of UNC119. Interacts with NPHP3 (when myristoylated). Interacts with CYS1 (when myristoylated). Interacts with MACIR; interaction only takes place when UNC119 is not liganded with myristoylated proteins. Interacts with LCK; this interaction plays a crucial role in activation of LCK. Interacts with FYN. Interacts with RAB11A; in a cell cycle-dependent manner. Interacts with LYN (via SH2 and SH3 domains); leading to LYN activation. Interacts with DNM1; leading to a decrease of DNM1 GTPase activity. Found in a complex with ABL1, ABL2, CRK and UNC119; leading to the inhibition of CRK phosphorylation by ABL kinases. Interacts with CD44. Interacts with KLHL18 (via kelch repeats). Interacts with PPP3CA, PPP3CB and PPP3CC. Interacts with USP48; this interaction promotes UNC119 stability. In terms of processing, phosphorylation suppresses its interaction with KLHL18 and down-regulates its KLHL18-mediated degradation. Phosphorylated more under light conditions than dark conditions. Dephosphorylated by calcineurin.

The protein resides in the cytoplasm. It is found in the cytoskeleton. The protein localises to the microtubule organizing center. It localises to the centrosome. Its subcellular location is the spindle. The protein resides in the spindle pole. Functionally, involved in synaptic functions in photoreceptor cells, the signal transduction in immune cells as a Src family kinase activator, endosome recycling, the uptake of bacteria and endocytosis, protein trafficking in sensory neurons and as lipid-binding chaperone with specificity for a diverse subset of myristoylated proteins. Specifically binds the myristoyl moiety of a subset of N-terminally myristoylated proteins and is required for their localization. Binds myristoylated GNAT1 and is required for G-protein localization and trafficking in sensory neurons. Probably plays a role in trafficking proteins in photoreceptor cells. Plays important roles in mediating Src family kinase signals for the completion of cytokinesis via RAB11A. This Canis lupus familiaris (Dog) protein is Protein unc-119 homolog A (UNC119).